We begin with the raw amino-acid sequence, 153 residues long: Carbohydrate-binding protein AWN (153 aa).

The first 20 residues, methionine 1–glycine 20, serve as a signal peptide directing secretion. Alanine 21 carries the post-translational modification N-acetylalanine. Intrachain disulfides connect cysteine 29/cysteine 50 and cysteine 73/cysteine 94. The CUB domain occupies cysteine 29–aspartate 130. A heparin-binding region spans residues isoleucine 93–aspartate 130.

It belongs to the spermadhesin family. Post-translationally, partial N-acetylation differentiates isoforms AWN-1 (not acetylated) and AWN-2 (acetylated).

Its subcellular location is the secreted. In terms of biological role, AWN proteins mediate the binding of boar spermatozoa to component(s) of the egg's zona pellucida by a carbohydrate-binding mechanism. Awn proteins are secretory components of the male accessory glands being coated to the sperm surface at the time of ejaculation. They possess as well heparin-, serine-protease-inhibitor-binding capability. This Sus scrofa (Pig) protein is Carbohydrate-binding protein AWN.